Here is a 393-residue protein sequence, read N- to C-terminus: CAI-1 autoinducer synthase (393 aa).

Lys240 is modified (N6-(pyridoxal phosphate)lysine).

The protein belongs to the class-II pyridoxal-phosphate-dependent aminotransferase family. It depends on pyridoxal 5'-phosphate as a cofactor.

Required for the synthesis of the quorum-sensing autoinducer CAI-1 ((S)-3-hydroxytridecan-4-one) which probably functions as an intragenus signal. This is CAI-1 autoinducer synthase (cqsA) from Vibrio campbellii (strain ATCC BAA-1116).